A 144-amino-acid chain; its full sequence is Flagellar assembly factor FliW (144 aa).

It belongs to the FliW family. Interacts with translational regulator CsrA and flagellin(s).

Its subcellular location is the cytoplasm. Functionally, acts as an anti-CsrA protein, binds CsrA and prevents it from repressing translation of its target genes, one of which is flagellin. Binds to flagellin and participates in the assembly of the flagellum. This is Flagellar assembly factor FliW from Geobacillus sp. (strain WCH70).